A 20-amino-acid chain; its full sequence is SHGKVETDEEFDARWVTYFS.

Belongs to the cytochrome c oxidase subunit 5A family. Component of the cytochrome c oxidase (complex IV, CIV), a multisubunit enzyme composed of 14 subunits. The complex is composed of a catalytic core of 3 subunits MT-CO1, MT-CO2 and MT-CO3, encoded in the mitochondrial DNA, and 11 supernumerary subunits COX4I, COX5A, COX5B, COX6A, COX6B, COX6C, COX7A, COX7B, COX7C, COX8 and NDUFA4, which are encoded in the nuclear genome. The complex exists as a monomer or a dimer and forms supercomplexes (SCs) in the inner mitochondrial membrane with NADH-ubiquinone oxidoreductase (complex I, CI) and ubiquinol-cytochrome c oxidoreductase (cytochrome b-c1 complex, complex III, CIII), resulting in different assemblies (supercomplex SCI(1)III(2)IV(1) and megacomplex MCI(2)III(2)IV(2)). Interacts with AFG1L. Interacts with RAB5IF.

The protein resides in the mitochondrion inner membrane. It participates in energy metabolism; oxidative phosphorylation. Its function is as follows. Component of the cytochrome c oxidase, the last enzyme in the mitochondrial electron transport chain which drives oxidative phosphorylation. The respiratory chain contains 3 multisubunit complexes succinate dehydrogenase (complex II, CII), ubiquinol-cytochrome c oxidoreductase (cytochrome b-c1 complex, complex III, CIII) and cytochrome c oxidase (complex IV, CIV), that cooperate to transfer electrons derived from NADH and succinate to molecular oxygen, creating an electrochemical gradient over the inner membrane that drives transmembrane transport and the ATP synthase. Cytochrome c oxidase is the component of the respiratory chain that catalyzes the reduction of oxygen to water. Electrons originating from reduced cytochrome c in the intermembrane space (IMS) are transferred via the dinuclear copper A center (CU(A)) of subunit 2 and heme A of subunit 1 to the active site in subunit 1, a binuclear center (BNC) formed by heme A3 and copper B (CU(B)). The BNC reduces molecular oxygen to 2 water molecules using 4 electrons from cytochrome c in the IMS and 4 protons from the mitochondrial matrix. The polypeptide is Cytochrome c oxidase subunit 5A-1, mitochondrial (Thunnus obesus (Bigeye tuna)).